The sequence spans 246 residues: Adenosine 5'-phosphosulfate reductase (246 aa).

4 residues coordinate [4Fe-4S] cluster: C131, C132, C214, and C217. C242 acts as the Nucleophile; cysteine thiosulfonate intermediate in catalysis.

Belongs to the PAPS reductase family. CysH subfamily. Requires [4Fe-4S] cluster as cofactor.

Its subcellular location is the cytoplasm. The enzyme catalyses [thioredoxin]-disulfide + sulfite + AMP + 2 H(+) = adenosine 5'-phosphosulfate + [thioredoxin]-dithiol. Its pathway is sulfur metabolism; hydrogen sulfide biosynthesis; sulfite from sulfate. Functionally, catalyzes the formation of sulfite from adenosine 5'-phosphosulfate (APS) using thioredoxin as an electron donor. The protein is Adenosine 5'-phosphosulfate reductase of Neisseria meningitidis serogroup B (strain ATCC BAA-335 / MC58).